The following is a 680-amino-acid chain: Fermitin family homolog 2 (680 aa).

The interval 40–81 (HIGGVMLKLVEKLDVKKDWSDHALWWEKKRTWLLKTHWTLDK) is interaction with membranes containing phosphatidylinositol phosphate. Residues 141 to 162 (LKKPRDPTKKKKKKLDDQSEDE) are disordered. Phosphoserine occurs at positions 159, 181, 339, and 351. In terms of domain architecture, FERM spans 189–661 (MTPTYDAHDG…GYIFLSTRAK (473 aa)). The PH domain occupies 380 to 476 (KVFKPKKLTL…WMAACRLASK (97 aa)). Lys-383 contributes to the a 1,2-diacyl-sn-glycero-3-phospho-(1D-myo-inositol-3,4,5-trisphosphate) binding site. Ser-666 bears the Phosphoserine mark.

It belongs to the kindlin family. In terms of assembly, interacts with ITGB1; the interaction is inhibited in presence of ITGB1BP1. Interacts with FBLIM1. Interacts with active, unphosphorylated CTNNB1. Identified in a complex with CTNNB1 and TCF7L2/TCF4. Interacts with ILK, ITGB1 and ITGB3. In terms of tissue distribution, detected in adult heart muscle (at protein level). Detected in heart, skeletal muscle and testis.

The protein resides in the cytoplasm. It localises to the cell cortex. The protein localises to the cytoskeleton. Its subcellular location is the stress fiber. It is found in the cell junction. The protein resides in the focal adhesion. It localises to the membrane. The protein localises to the cell projection. Its subcellular location is the lamellipodium membrane. It is found in the nucleus. The protein resides in the myofibril. It localises to the sarcomere. The protein localises to the i band. Its subcellular location is the cell surface. Functionally, scaffolding protein that enhances integrin activation mediated by TLN1 and/or TLN2, but activates integrins only weakly by itself. Binds to membranes enriched in phosphoinositides. Enhances integrin-mediated cell adhesion onto the extracellular matrix and cell spreading; this requires both its ability to interact with integrins and with phospholipid membranes. Required for the assembly of focal adhesions. Participates in the connection between extracellular matrix adhesion sites and the actin cytoskeleton and also in the orchestration of actin assembly and cell shape modulation. Recruits FBLIM1 to focal adhesions. Plays a role in the TGFB1 and integrin signaling pathways. Stabilizes active CTNNB1 and plays a role in the regulation of transcription mediated by CTNNB1 and TCF7L2/TCF4 and in Wnt signaling. In Mus musculus (Mouse), this protein is Fermitin family homolog 2 (Fermt2).